Consider the following 286-residue polypeptide: PTS system mannose-specific EIID component (286 aa).

Position 1 is an N-formylmethionine (M1). The Cytoplasmic portion of the chain corresponds to 1-17 (MSEMVDTTQTTTEKKLT). In terms of domain architecture, PTS EIID spans 14–284 (KKLTQSDIRG…GIAGYACGLL (271 aa)). An intramembrane segment occupies 18–55 (QSDIRGVFLRSNLFQGSWNFERMQALGFCFSMVPAIRR). The Cytoplasmic portion of the chain corresponds to 56 to 62 (LYPENNE). The stretch at 63–95 (ARKQAIRRHLEFFNTQPFVAAPILGVTLALEEQ) is an intramembrane region. The Cytoplasmic segment spans residues 96-103 (RANGAEID). The segment at 104–143 (DGAINGIKVGLMGPLAGVGDPIFWGTVRPVFAALGAGIAM) is a transmembrane helix. Residues 144-147 (SGSL) are Periplasmic-facing. Residues 148-176 (LGPLLFFILFNLVRLATRYYGVAYGYSKG) are membrane-embedded. Residues 177 to 186 (IDIVKDMGGG) lie on the Cytoplasmic side of the membrane. At 187 to 212 (FLQKLTEGASILGLFVMGALVNKWTH) the chain is embedded in the membrane. Residues 213–244 (VNIPLVVSRITDQTGKEHVTTVQTILDQLMPG) are Periplasmic-facing. The segment at 245 to 258 (LVPLLLTFACMWLL) is a transmembrane helix. Over 259-264 (RKKVNP) the chain is Cytoplasmic. Positions 265 to 283 (LWIIVGFFVIGIAGYACGL) form a transmembrane segment. The Periplasmic segment spans residues 284 to 286 (LGL).

Homotrimer of protomers that are composed of two subunits, IIC and IID.

It is found in the cell inner membrane. The phosphoenolpyruvate-dependent sugar phosphotransferase system (sugar PTS), a major carbohydrate active transport system, catalyzes the phosphorylation of incoming sugar substrates concomitantly with their translocation across the cell membrane. The enzyme II ManXYZ PTS system is involved in mannose transport. The polypeptide is PTS system mannose-specific EIID component (manZ) (Escherichia coli O6:H1 (strain CFT073 / ATCC 700928 / UPEC)).